A 114-amino-acid polypeptide reads, in one-letter code: Pro-FMRFamide-related neuropeptide FF (114 aa).

An N-terminal signal peptide occupies residues 1-21 (MDSKWAALLLLLLLLLNWGHT). Residues 22–69 (EEAGSWGEDQVFAGEDKGPHPPQYAHIPDRIQTPGSLFRVLLQAMDTP) constitute a propeptide that is removed on maturation. Phenylalanine 82 is modified (phenylalanine amide). A propeptide spanning residues 85-100 (SAWGSWSKEQLNPQAR) is cleaved from the precursor. Residue phenylalanine 111 is modified to Phenylalanine amide.

Belongs to the FARP (FMRFamide related peptide) family.

Its subcellular location is the secreted. In terms of biological role, morphine modulating peptides. Have wide-ranging physiologic effects, including the modulation of morphine-induced analgesia, elevation of arterial blood pressure, and increased somatostatin secretion from the pancreas. Neuropeptide FF potentiates and sensitizes ASIC1 and ASIC3 channels. The chain is Pro-FMRFamide-related neuropeptide FF (Npff) from Mus musculus (Mouse).